The sequence spans 249 residues: Phosphomannomutase (249 aa).

Residue Asp15 is the Nucleophile of the active site. The Mg(2+) site is built by Asp15 and Asp17. Residue Asp17 is the Proton donor/acceptor of the active site. Alpha-D-mannose 1-phosphate contacts are provided by Arg24, Arg126, Arg137, Arg144, Ser182, and Asp184. The Mg(2+) site is built by Asp210, Phe222, and Thr227.

Belongs to the eukaryotic PMM family. In terms of assembly, homodimer. Mg(2+) serves as cofactor. In terms of tissue distribution, expressed in roots, leaves, flag leaves and immature spikes.

The protein resides in the cytoplasm. The catalysed reaction is alpha-D-mannose 1-phosphate = D-mannose 6-phosphate. It functions in the pathway nucleotide-sugar biosynthesis; GDP-alpha-D-mannose biosynthesis; alpha-D-mannose 1-phosphate from D-fructose 6-phosphate: step 2/2. Catalyzes the interconversion of mannose-6-phosphate to mannose-1-phosphate, the precursor for the synthesis of GDP-mannose. GDP-mannose is an essential sugar nucleotide for the synthesis of D-mannose-containing cell wall polysaccharides (galactomannans and glucomannans), glycolipids, glycoproteins and the antioxidant L-ascorbate. Can complement the yeast temperature-sensitive mutant sec53-6. This is Phosphomannomutase from Triticum aestivum (Wheat).